A 540-amino-acid polypeptide reads, in one-letter code: Berberine bridge enzyme-like 16 (540 aa).

An N-terminal signal peptide occupies residues 1–24 (MKFWSRPLTFLIIIIYLIIQQVNS). Cys38 and Cys101 are disulfide-bonded. N-linked (GlcNAc...) asparagine glycosylation is present at Asn59. One can recognise an FAD-binding PCMH-type domain in the interval 79–254 (STRKPEVIVA…LAWKIKLVRV (176 aa)). Residues 116–178 (HDYEGFSYTS…KVHAFPAGVC (63 aa)) constitute a cross-link (6-(S-cysteinyl)-8alpha-(pros-histidyl)-FAD (His-Cys)). Residues Asn325 and Asn496 are each glycosylated (N-linked (GlcNAc...) asparagine).

It belongs to the oxygen-dependent FAD-linked oxidoreductase family. FAD is required as a cofactor. Post-translationally, the FAD cofactor is bound via a bicovalent 6-S-cysteinyl, 8alpha-N1-histidyl FAD linkage.

It is found in the secreted. The protein resides in the cell wall. This chain is Berberine bridge enzyme-like 16, found in Arabidopsis thaliana (Mouse-ear cress).